Consider the following 72-residue polypeptide: Heat-stable enterotoxin A2 (72 aa).

A signal peptide spans 1 to 19 (MKKSILFIFLSVLSFSPFA). Positions 20 to 53 (QDAKPAGSSKEKITLESKKCNIVKKNNESSPESM) are excised as a propeptide. Cystine bridges form between C59/C64, C60/C68, and C63/C71.

This sequence belongs to the heat-stable enterotoxin family.

It localises to the secreted. Its function is as follows. Toxin which activates the particulate form of guanylate cyclase and increases cyclic GMP levels within the host intestinal epithelial cells. This chain is Heat-stable enterotoxin A2 (sta2), found in Escherichia coli.